Reading from the N-terminus, the 266-residue chain is Sec-independent protein translocase protein TatC (266 aa).

The next 6 membrane-spanning stretches (helical) occupy residues 28–48, 93–113, 134–154, 183–203, 221–241, and 242–262; these read MIIA…YILF, FNIY…PYIF, GIIM…YFIL, LIMH…FIYF, HAFL…IFST, and IVVL…SFYV.

This sequence belongs to the TatC family. As to quaternary structure, forms a complex with TatA.

It is found in the cell inner membrane. In terms of biological role, part of the twin-arginine translocation (Tat) system that transports large folded proteins containing a characteristic twin-arginine motif in their signal peptide across membranes. In Blattabacterium sp. subsp. Periplaneta americana (strain BPLAN) (Periplaneta americana symbiotic bacterium), this protein is Sec-independent protein translocase protein TatC.